The following is a 151-amino-acid chain: UPF0208 membrane protein plu3094 (151 aa).

Helical transmembrane passes span Phe46 to Leu65 and Leu69 to Gly91.

This sequence belongs to the UPF0208 family.

The protein localises to the cell inner membrane. The polypeptide is UPF0208 membrane protein plu3094 (Photorhabdus laumondii subsp. laumondii (strain DSM 15139 / CIP 105565 / TT01) (Photorhabdus luminescens subsp. laumondii)).